A 250-amino-acid chain; its full sequence is Acetylglutamate kinase (250 aa).

Substrate is bound by residues G41 to G42, R63, and N156.

The protein belongs to the acetylglutamate kinase family. ArgB subfamily.

It localises to the cytoplasm. The enzyme catalyses N-acetyl-L-glutamate + ATP = N-acetyl-L-glutamyl 5-phosphate + ADP. Its pathway is amino-acid biosynthesis; L-arginine biosynthesis; N(2)-acetyl-L-ornithine from L-glutamate: step 2/4. In terms of biological role, catalyzes the ATP-dependent phosphorylation of N-acetyl-L-glutamate. The polypeptide is Acetylglutamate kinase (Listeria welshimeri serovar 6b (strain ATCC 35897 / DSM 20650 / CCUG 15529 / CIP 8149 / NCTC 11857 / SLCC 5334 / V8)).